Consider the following 320-residue polypeptide: Lipoyl synthase (320 aa).

C67, C72, C78, C93, C97, C100, and S307 together coordinate [4Fe-4S] cluster. Positions F79–E296 constitute a Radical SAM core domain.

It belongs to the radical SAM superfamily. Lipoyl synthase family. The cofactor is [4Fe-4S] cluster.

The protein resides in the cytoplasm. The enzyme catalyses [[Fe-S] cluster scaffold protein carrying a second [4Fe-4S](2+) cluster] + N(6)-octanoyl-L-lysyl-[protein] + 2 oxidized [2Fe-2S]-[ferredoxin] + 2 S-adenosyl-L-methionine + 4 H(+) = [[Fe-S] cluster scaffold protein] + N(6)-[(R)-dihydrolipoyl]-L-lysyl-[protein] + 4 Fe(3+) + 2 hydrogen sulfide + 2 5'-deoxyadenosine + 2 L-methionine + 2 reduced [2Fe-2S]-[ferredoxin]. Its pathway is protein modification; protein lipoylation via endogenous pathway; protein N(6)-(lipoyl)lysine from octanoyl-[acyl-carrier-protein]: step 2/2. Its function is as follows. Catalyzes the radical-mediated insertion of two sulfur atoms into the C-6 and C-8 positions of the octanoyl moiety bound to the lipoyl domains of lipoate-dependent enzymes, thereby converting the octanoylated domains into lipoylated derivatives. In Mannheimia succiniciproducens (strain KCTC 0769BP / MBEL55E), this protein is Lipoyl synthase.